Consider the following 272-residue polypeptide: HTH-type transcriptional repressor AllR (272 aa).

The segment at 1-20 (MTEVRRRGRPGQQEPSAQKG) is disordered. The 63-residue stretch at 21–83 (AQALERGIAI…SQLGWWHIGL (63 aa)) folds into the HTH iclR-type domain. A DNA-binding region (H-T-H motif) is located at residues 43–62 (VSDISLNLDLPLSTTFRLLK). An IclR-ED domain is found at 98-267 (VLSVGGPFMR…ARNISTALGL (170 aa)). Residues 154–156 (SGA), D207, C217, and 234–236 (SIS) contribute to the glyoxylate site.

In terms of biological role, negative regulator of allantoin and glyoxylate utilization operons. Binds to the gcl promoter and to the allS-allA intergenic region. This chain is HTH-type transcriptional repressor AllR (allR), found in Klebsiella pneumoniae.